The primary structure comprises 76 residues: Exodeoxyribonuclease 7 small subunit (76 aa).

Belongs to the XseB family. Heterooligomer composed of large and small subunits.

It localises to the cytoplasm. It catalyses the reaction Exonucleolytic cleavage in either 5'- to 3'- or 3'- to 5'-direction to yield nucleoside 5'-phosphates.. Its function is as follows. Bidirectionally degrades single-stranded DNA into large acid-insoluble oligonucleotides, which are then degraded further into small acid-soluble oligonucleotides. In Latilactobacillus sakei subsp. sakei (strain 23K) (Lactobacillus sakei subsp. sakei), this protein is Exodeoxyribonuclease 7 small subunit.